An 85-amino-acid polypeptide reads, in one-letter code: U4-theraphotoxin-Hhn1d (85 aa).

The first 22 residues, 1–22, serve as a signal peptide directing secretion; the sequence is MKVTLIAILTCAAVLVLHTTAA. Residues 23–48 constitute a propeptide that is removed on maturation; sequence EELEAESQLMEVGMPDTELAAVDEER. Disulfide bonds link C52–C66, C56–C77, and C71–C82.

It belongs to the neurotoxin 12 (Hwtx-2) family. 02 (Hwtx-2) subfamily. In terms of tissue distribution, expressed by the venom gland.

The protein resides in the secreted. Postsynaptic neurotoxin. The sequence is that of U4-theraphotoxin-Hhn1d from Cyriopagopus hainanus (Chinese bird spider).